Reading from the N-terminus, the 90-residue chain is Neuropeptide-like 3 (90 aa).

An N-terminal signal peptide occupies residues 1–16 (MFKLCVFVALLSLAAA). 2 propeptides span residues 17–54 (APAP…LAPQ) and 67–79 (AITQ…LLIK). Isoleucine 89 carries the post-translational modification Isoleucine amide.

Its subcellular location is the secreted. The sequence is that of Neuropeptide-like 3 (Nplp3) from Drosophila melanogaster (Fruit fly).